A 121-amino-acid polypeptide reads, in one-letter code: Transposase InsC for insertion element IS2A (121 aa).

It belongs to the transposase 8 family.

In terms of biological role, involved in the transposition of the insertion sequence IS2. In Escherichia coli (strain K12), this protein is Transposase InsC for insertion element IS2A (insC1).